The following is a 108-amino-acid chain: UPF0060 membrane protein YnfA (108 aa).

Topologically, residues 1–5 (MIKTT) are periplasmic. The helical transmembrane segment at 6–26 (LLFFATALCEIIGCFLPWLWL) threads the bilayer. At 27–30 (KRNA) the chain is on the cytoplasmic side. A helical transmembrane segment spans residues 31-51 (SIWLLLPAGISLALFVWLLTL). Topologically, residues 52–60 (HPAASGRVY) are periplasmic. A helical transmembrane segment spans residues 61 to 81 (AAYGGVYVCTALIWLRVVDGV). Topologically, residues 82–84 (KLS) are cytoplasmic. A helical transmembrane segment spans residues 85–105 (LYDWTGALIALCGMLIIVAGW). Residues 106–108 (GRT) are Periplasmic-facing.

The protein belongs to the UPF0060 family.

It localises to the cell inner membrane. The polypeptide is UPF0060 membrane protein YnfA (Escherichia coli (strain SMS-3-5 / SECEC)).